Reading from the N-terminus, the 51-residue chain is Lipid-anchored plasma membrane protein CPP3 (51 aa).

The interval 1–28 is disordered; sequence MRHHQNMHYAPQQQPVYVQQPPPRRESG.

Belongs to the CYSTM1 family. In terms of processing, palmitoylated near the C-terminus.

The protein resides in the cell membrane. The sequence is that of Lipid-anchored plasma membrane protein CPP3 from Saccharomyces cerevisiae (strain ATCC 204508 / S288c) (Baker's yeast).